We begin with the raw amino-acid sequence, 154 residues long: Myoglobin (154 aa).

The 147-residue stretch at 2–148 (GLSDGEWQLV…FRNDMAAKYK (147 aa)) folds into the Globin domain. Position 4 is a phosphoserine (S4). H65 serves as a coordination point for nitrite. H65 serves as a coordination point for O2. T68 is modified (phosphothreonine). H94 contacts heme b.

Belongs to the globin family. Monomeric.

Its subcellular location is the cytoplasm. It localises to the sarcoplasm. The catalysed reaction is Fe(III)-heme b-[protein] + nitric oxide + H2O = Fe(II)-heme b-[protein] + nitrite + 2 H(+). It catalyses the reaction H2O2 + AH2 = A + 2 H2O. Monomeric heme protein which primary function is to store oxygen and facilitate its diffusion within muscle tissues. Reversibly binds oxygen through a pentacoordinated heme iron and enables its timely and efficient release as needed during periods of heightened demand. Depending on the oxidative conditions of tissues and cells, and in addition to its ability to bind oxygen, it also has a nitrite reductase activity whereby it regulates the production of bioactive nitric oxide. Under stress conditions, like hypoxia and anoxia, it also protects cells against reactive oxygen species thanks to its pseudoperoxidase activity. This Aotus trivirgatus (Three-striped night monkey) protein is Myoglobin (MB).